Here is a 158-residue protein sequence, read N- to C-terminus: MATVVGFDFGLKRFGAAVGQSVSMTASPLKEIPAQDGIPRWEAIEALLEEWKPALVIVGEPLNMDGSVSEMALRARKFARRLHGRYNLRVEMADERLTSSEAKSMVRERYGQRDFGRFAVDSIAAVFIVESWLEAHADNLDAFLHPPRKQGKSNDIID.

Belongs to the YqgF nuclease family.

Its subcellular location is the cytoplasm. Its function is as follows. Could be a nuclease involved in processing of the 5'-end of pre-16S rRNA. The protein is Putative pre-16S rRNA nuclease of Hahella chejuensis (strain KCTC 2396).